Here is an 80-residue protein sequence, read N- to C-terminus: DNA-directed RNA polymerase RPB10 homolog (80 aa).

Residues Cys-7, Cys-10, Cys-65, and Cys-66 each contribute to the Zn(2+) site.

Belongs to the archaeal RpoN/eukaryotic RPB10 RNA polymerase subunit family. In terms of assembly, part of the viral DNA-directed RNA polymerase that consists of 8 polII-like subunits (RPB1, RPB2, RPB3, RPB5, RPB6, RPB7, RPB9, RPB10), a capping enzyme and a termination factor.

It is found in the host cytoplasm. In terms of biological role, component of the DNA-directed RNA polymerase (RNAP) that catalyzes the transcription in the cytoplasm of viral DNA into RNA using the four ribonucleoside triphosphates as substrates. The chain is DNA-directed RNA polymerase RPB10 homolog from African swine fever virus (strain Badajoz 1971 Vero-adapted) (Ba71V).